The chain runs to 439 residues: Putative myrosinase 3 (439 aa).

The N-terminal stretch at 1-19 is a signal peptide; that stretch reads MKFRALGLVLLLAVETCKA. N-linked (GlcNAc...) asparagine glycosylation occurs at Asn33. Residues His145, 190-191, and Tyr316 each bind a beta-D-glucoside; that span reads NQ. The N-linked (GlcNAc...) asparagine glycan is linked to Asn336. 2 residues coordinate a beta-D-glucoside: Glu386 and Trp404. Catalysis depends on Glu386, which acts as the Nucleophile.

This sequence belongs to the glycosyl hydrolase 1 family. Expressed specifically in stamens and petals.

The enzyme catalyses a thioglucoside + H2O = a sugar + a thiol.. The sequence is that of Putative myrosinase 3 from Arabidopsis thaliana (Mouse-ear cress).